We begin with the raw amino-acid sequence, 314 residues long: (-)-isopiperitenone reductase (314 aa).

10–33 (VTGANKGIGFEICRQLAEKGIIVI) serves as a coordination point for NADP(+). Position 182 (S182) interacts with substrate.

The protein belongs to the short-chain dehydrogenases/reductases (SDR) family.

It is found in the cytoplasm. It catalyses the reaction (2R,5R)-isopulegone + NADP(+) = (6R)-isopiperitenone + NADPH + H(+). It participates in secondary metabolite biosynthesis; terpenoid biosynthesis. Its function is as follows. Monoterpene synthase that catalyzes the specific reduction of the 1(2)-double bond of (-)-isopiperitenone to produce (+)-cis-isopulegone. Does not catalyze the reverse reaction. Unable to reduce (+)-pulegone, (+)-cis-isopulegone, (-)-menthone or the 1,2-double bond of (-)-carvone. Able to utilize NADH with 20% the efficiency of NADPH. The sequence is that of (-)-isopiperitenone reductase from Mentha piperita (Peppermint).